Reading from the N-terminus, the 29-residue chain is Kappa-theraphotoxin-Ps1a (29 aa).

3 disulfides stabilise this stretch: Cys2-Cys16, Cys9-Cys21, and Cys15-Cys25. At Ile29 the chain carries Isoleucine amide.

It belongs to the neurotoxin 30 (phrixotoxin) family. In terms of tissue distribution, expressed by the venom gland.

The protein resides in the secreted. Its function is as follows. Potent and specific blocker of Kv4.2/KCND2 (IC(50)=5 nM) and Kv4.3/KCND3 (IC(50)=28 nM) potassium channels. Acts by altering the gating properties of these channels. Also shows moderate inhibition on human voltage-gated sodium channel Nav1.7/SCN9A activation (IC(50)=423 nM). The polypeptide is Kappa-theraphotoxin-Ps1a (Paraphysa scrofa (Chilean copper tarantula)).